The sequence spans 346 residues: DNA repair protein XRCC3 (346 aa).

Met-1 carries the N-acetylmethionine modification. 107-114 provides a ligand contact to ATP; sequence GRSSAGKT.

This sequence belongs to the RecA family. RAD51 subfamily. In terms of assembly, interacts with RAD51C and RAD51. Part of the CX3 complex consisting of RAD51C and XRCC3; the complex has a ring-like structure arranged into a flat disk around a central channel; CX3 can interact with RAD51 in vitro. Forms a complex with FANCD2, BRCA2 and phosphorylated FANCG. Interacts with SWSAP1 and ZSWIM7; involved in homologous recombination repair. Interacts directly with PALB2 which may serve as a scaffold for a HR complex containing PALB2, BRCA2, RAD51C, RAD51 and XRCC3.

It is found in the nucleus. The protein resides in the cytoplasm. The protein localises to the perinuclear region. Its subcellular location is the mitochondrion. Its function is as follows. Involved in the homologous recombination repair (HRR) pathway of double-stranded DNA, thought to repair chromosomal fragmentation, translocations and deletions. Part of the RAD51 paralog protein complex CX3 which acts in the BRCA1-BRCA2-dependent HR pathway. Upon DNA damage, CX3 acts downstream of RAD51 recruitment; the complex binds predominantly to the intersection of the four duplex arms of the Holliday junction (HJ) and to junctions of replication forks. Involved in HJ resolution and thus in processing HR intermediates late in the DNA repair process; the function may be linked to the CX3 complex and seems to involve GEN1 during mitotic cell cycle progression. Part of a PALB2-scaffolded HR complex containing BRCA2 and RAD51C and which is thought to play a role in DNA repair by HR. Plays a role in regulating mitochondrial DNA copy number under conditions of oxidative stress in the presence of RAD51 and RAD51C. This is DNA repair protein XRCC3 (XRCC3) from Homo sapiens (Human).